The primary structure comprises 315 residues: Adenine deaminase (315 aa).

Positions 14, 16, and 194 each coordinate Zn(2+). Catalysis depends on Glu197, which acts as the Proton donor. Asp275 contacts Zn(2+). Asp276 lines the substrate pocket.

It belongs to the metallo-dependent hydrolases superfamily. Adenosine and AMP deaminases family. Adenine deaminase type 2 subfamily. It depends on Zn(2+) as a cofactor.

The enzyme catalyses adenine + H2O + H(+) = hypoxanthine + NH4(+). In terms of biological role, catalyzes the hydrolytic deamination of adenine to hypoxanthine. Plays an important role in the purine salvage pathway and in nitrogen catabolism. This Pseudomonas putida (strain W619) protein is Adenine deaminase.